A 236-amino-acid chain; its full sequence is Small ribosomal subunit protein uS10m (236 aa).

A mitochondrion-targeting transit peptide spans 1–24 (MMRQSIRPLRAFSSEVSWIARRTQ). The interval 29 to 49 (KPGDLVPNKPEPSKNEQEPRF) is disordered. Over residues 39-49 (EPSKNEQEPRF) the composition is skewed to basic and acidic residues.

Belongs to the universal ribosomal protein uS10 family. As to quaternary structure, part of the mitochondrial small ribosomal subunit.

Its subcellular location is the mitochondrion. Involved in mitochondrial genome encoded proteins translation. Involved in the binding of tRNA to the ribosomes. The protein is Small ribosomal subunit protein uS10m (RSM10) of Gibberella zeae (strain ATCC MYA-4620 / CBS 123657 / FGSC 9075 / NRRL 31084 / PH-1) (Wheat head blight fungus).